A 141-amino-acid polypeptide reads, in one-letter code: Large ribosomal subunit protein uL14 (141 aa).

This sequence belongs to the universal ribosomal protein uL14 family. As to quaternary structure, part of the 50S ribosomal subunit. Forms a cluster with proteins L3 and L24e, part of which may contact the 16S rRNA in 2 intersubunit bridges.

Its function is as follows. Binds to 23S rRNA. Forms part of two intersubunit bridges in the 70S ribosome. In Pyrococcus abyssi (strain GE5 / Orsay), this protein is Large ribosomal subunit protein uL14.